Reading from the N-terminus, the 181-residue chain is Protein Syd (181 aa).

This sequence belongs to the Syd family.

Its subcellular location is the cell inner membrane. Its function is as follows. Interacts with the SecY protein in vivo. May bind preferentially to an uncomplexed state of SecY, thus functioning either as a chelating agent for excess SecY in the cell or as a regulatory factor that negatively controls the translocase function. This is Protein Syd from Cronobacter sakazakii (strain ATCC BAA-894) (Enterobacter sakazakii).